A 258-amino-acid polypeptide reads, in one-letter code: UPF0246 protein YaaA (258 aa).

Belongs to the UPF0246 family.

The protein is UPF0246 protein YaaA of Escherichia coli O6:K15:H31 (strain 536 / UPEC).